The primary structure comprises 517 residues: Crotonobetaine/carnitine--CoA ligase (517 aa).

This sequence belongs to the ATP-dependent AMP-binding enzyme family.

The catalysed reaction is 4-(trimethylamino)butanoate + ATP + CoA = 4-(trimethylamino)butanoyl-CoA + AMP + diphosphate. The enzyme catalyses crotonobetaine + ATP + CoA = crotonobetainyl-CoA + AMP + diphosphate. It carries out the reaction (R)-carnitine + ATP + CoA = (R)-carnitinyl-CoA + AMP + diphosphate. The protein operates within amine and polyamine metabolism; carnitine metabolism. In terms of biological role, catalyzes the transfer of CoA to carnitine, generating the initial carnitinyl-CoA needed for the CaiB reaction cycle. Also has activity toward crotonobetaine and gamma-butyrobetaine. The sequence is that of Crotonobetaine/carnitine--CoA ligase from Escherichia coli O7:K1 (strain IAI39 / ExPEC).